The sequence spans 334 residues: tRNA-dihydrouridine synthase B (334 aa).

FMN is bound by residues 16 to 18 (PMA) and Gln70. Cys100 serves as the catalytic Proton donor. FMN is bound by residues Lys139, 200–202 (NGD), and 224–225 (GR).

It belongs to the Dus family. DusB subfamily. The cofactor is FMN.

It catalyses the reaction a 5,6-dihydrouridine in tRNA + NAD(+) = a uridine in tRNA + NADH + H(+). It carries out the reaction a 5,6-dihydrouridine in tRNA + NADP(+) = a uridine in tRNA + NADPH + H(+). In terms of biological role, catalyzes the synthesis of 5,6-dihydrouridine (D), a modified base found in the D-loop of most tRNAs, via the reduction of the C5-C6 double bond in target uridines. This is tRNA-dihydrouridine synthase B from Serratia marcescens.